The sequence spans 216 residues: Redox-sensing transcriptional repressor Rex (216 aa).

Positions 20–59 (QYYRLFKSLVEENVTRTNSQLISEKIGVDAATIRRDFSLF) form a DNA-binding region, H-T-H motif. 94-99 (GVGNLG) lines the NAD(+) pocket.

Belongs to the transcriptional regulatory Rex family. As to quaternary structure, homodimer.

It is found in the cytoplasm. Modulates transcription in response to changes in cellular NADH/NAD(+) redox state. In Lactococcus lactis subsp. cremoris (Streptococcus cremoris), this protein is Redox-sensing transcriptional repressor Rex.